A 304-amino-acid chain; its full sequence is UDP-N-acetylenolpyruvoylglucosamine reductase (304 aa).

The 166-residue stretch at 28-193 (KTGGPADYLA…LTATFALTPG (166 aa)) folds into the FAD-binding PCMH-type domain. The active site involves Arg-172. The active-site Proton donor is the Ser-222. The active site involves Glu-292.

This sequence belongs to the MurB family. Requires FAD as cofactor.

It is found in the cytoplasm. The enzyme catalyses UDP-N-acetyl-alpha-D-muramate + NADP(+) = UDP-N-acetyl-3-O-(1-carboxyvinyl)-alpha-D-glucosamine + NADPH + H(+). The protein operates within cell wall biogenesis; peptidoglycan biosynthesis. Its function is as follows. Cell wall formation. This chain is UDP-N-acetylenolpyruvoylglucosamine reductase, found in Levilactobacillus brevis (strain ATCC 367 / BCRC 12310 / CIP 105137 / JCM 1170 / LMG 11437 / NCIMB 947 / NCTC 947) (Lactobacillus brevis).